Here is a 341-residue protein sequence, read N- to C-terminus: Uroporphyrinogen decarboxylase (341 aa).

Substrate-binding positions include 23–27, Asp73, Tyr147, Ser202, and His318; that span reads RQAGR.

This sequence belongs to the uroporphyrinogen decarboxylase family. As to quaternary structure, homodimer.

It localises to the cytoplasm. The catalysed reaction is uroporphyrinogen III + 4 H(+) = coproporphyrinogen III + 4 CO2. It functions in the pathway porphyrin-containing compound metabolism; protoporphyrin-IX biosynthesis; coproporphyrinogen-III from 5-aminolevulinate: step 4/4. In terms of biological role, catalyzes the decarboxylation of four acetate groups of uroporphyrinogen-III to yield coproporphyrinogen-III. The polypeptide is Uroporphyrinogen decarboxylase (Erythrobacter litoralis (strain HTCC2594)).